The primary structure comprises 254 residues: 3-dehydroquinate dehydratase (254 aa).

Residues 47-49 (EWR) and R83 each bind 3-dehydroquinate. H144 serves as the catalytic Proton donor/acceptor. K171 acts as the Schiff-base intermediate with substrate in catalysis. 3 residues coordinate 3-dehydroquinate: R214, S233, and Q237.

This sequence belongs to the type-I 3-dehydroquinase family. As to quaternary structure, homodimer.

The catalysed reaction is 3-dehydroquinate = 3-dehydroshikimate + H2O. The protein operates within metabolic intermediate biosynthesis; chorismate biosynthesis; chorismate from D-erythrose 4-phosphate and phosphoenolpyruvate: step 3/7. Functionally, involved in the third step of the chorismate pathway, which leads to the biosynthesis of aromatic amino acids. Catalyzes the cis-dehydration of 3-dehydroquinate (DHQ) and introduces the first double bond of the aromatic ring to yield 3-dehydroshikimate. This chain is 3-dehydroquinate dehydratase, found in Clostridium botulinum (strain Eklund 17B / Type B).